The primary structure comprises 386 residues: Formate-dependent phosphoribosylglycinamide formyltransferase (386 aa).

N(1)-(5-phospho-beta-D-ribosyl)glycinamide contacts are provided by residues 15–16 and glutamate 75; that span reads EL. ATP contacts are provided by residues arginine 107, lysine 148, 153-158, 188-191, and glutamate 196; these read SSGKGQ and EQFI. The 190-residue stretch at 112–301 folds into the ATP-grasp domain; the sequence is ALAAQQLNLQ…EFELHLRAIV (190 aa). Positions 260 and 272 each coordinate Mg(2+). N(1)-(5-phospho-beta-D-ribosyl)glycinamide contacts are provided by residues aspartate 279, lysine 349, and 356 to 357; that span reads RR.

Belongs to the PurK/PurT family. Homodimer.

It carries out the reaction N(1)-(5-phospho-beta-D-ribosyl)glycinamide + formate + ATP = N(2)-formyl-N(1)-(5-phospho-beta-D-ribosyl)glycinamide + ADP + phosphate + H(+). It participates in purine metabolism; IMP biosynthesis via de novo pathway; N(2)-formyl-N(1)-(5-phospho-D-ribosyl)glycinamide from N(1)-(5-phospho-D-ribosyl)glycinamide (formate route): step 1/1. Its function is as follows. Involved in the de novo purine biosynthesis. Catalyzes the transfer of formate to 5-phospho-ribosyl-glycinamide (GAR), producing 5-phospho-ribosyl-N-formylglycinamide (FGAR). Formate is provided by PurU via hydrolysis of 10-formyl-tetrahydrofolate. The protein is Formate-dependent phosphoribosylglycinamide formyltransferase of Francisella tularensis subsp. tularensis (strain SCHU S4 / Schu 4).